We begin with the raw amino-acid sequence, 610 residues long: UvrABC system protein C (610 aa).

Positions 16 to 94 constitute a GIY-YIG domain; that stretch reads SQPGVYRMYD…IKLYQPRYNV (79 aa). A UVR domain is found at 204 to 239; it reads DQVLTQLIARMEKASQNLEFEEAARIRDQIQAVRRV.

Belongs to the UvrC family. As to quaternary structure, interacts with UvrB in an incision complex.

The protein localises to the cytoplasm. In terms of biological role, the UvrABC repair system catalyzes the recognition and processing of DNA lesions. UvrC both incises the 5' and 3' sides of the lesion. The N-terminal half is responsible for the 3' incision and the C-terminal half is responsible for the 5' incision. The protein is UvrABC system protein C of Escherichia fergusonii (strain ATCC 35469 / DSM 13698 / CCUG 18766 / IAM 14443 / JCM 21226 / LMG 7866 / NBRC 102419 / NCTC 12128 / CDC 0568-73).